We begin with the raw amino-acid sequence, 555 residues long: Formate--tetrahydrofolate ligase (555 aa).

65–72 provides a ligand contact to ATP; the sequence is TPAGEGKS.

This sequence belongs to the formate--tetrahydrofolate ligase family.

The catalysed reaction is (6S)-5,6,7,8-tetrahydrofolate + formate + ATP = (6R)-10-formyltetrahydrofolate + ADP + phosphate. It functions in the pathway one-carbon metabolism; tetrahydrofolate interconversion. The polypeptide is Formate--tetrahydrofolate ligase (Staphylococcus carnosus (strain TM300)).